Reading from the N-terminus, the 286-residue chain is NAD kinase (286 aa).

Catalysis depends on Asp74, which acts as the Proton acceptor. Residues 74–75, 148–149, Asp178, Ala186, 189–194, and Gln244 contribute to the NAD(+) site; these read DG, ND, and TAYNLS.

It belongs to the NAD kinase family. It depends on a divalent metal cation as a cofactor.

It localises to the cytoplasm. It catalyses the reaction NAD(+) + ATP = ADP + NADP(+) + H(+). Involved in the regulation of the intracellular balance of NAD and NADP, and is a key enzyme in the biosynthesis of NADP. Catalyzes specifically the phosphorylation on 2'-hydroxyl of the adenosine moiety of NAD to yield NADP. The polypeptide is NAD kinase (Campylobacter jejuni subsp. doylei (strain ATCC BAA-1458 / RM4099 / 269.97)).